A 509-amino-acid polypeptide reads, in one-letter code: Lysine--tRNA ligase (509 aa).

The Mg(2+) site is built by glutamate 418 and glutamate 425.

This sequence belongs to the class-II aminoacyl-tRNA synthetase family. As to quaternary structure, homodimer. Mg(2+) serves as cofactor.

It localises to the cytoplasm. It catalyses the reaction tRNA(Lys) + L-lysine + ATP = L-lysyl-tRNA(Lys) + AMP + diphosphate. The protein is Lysine--tRNA ligase (lysS) of Acinetobacter baylyi (strain ATCC 33305 / BD413 / ADP1).